Here is a 308-residue protein sequence, read N- to C-terminus: Elongation factor Ts (308 aa).

Residues 80–83 are involved in Mg(2+) ion dislocation from EF-Tu; the sequence is TDFV.

This sequence belongs to the EF-Ts family.

It localises to the cytoplasm. Its function is as follows. Associates with the EF-Tu.GDP complex and induces the exchange of GDP to GTP. It remains bound to the aminoacyl-tRNA.EF-Tu.GTP complex up to the GTP hydrolysis stage on the ribosome. The polypeptide is Elongation factor Ts (Sphingopyxis alaskensis (strain DSM 13593 / LMG 18877 / RB2256) (Sphingomonas alaskensis)).